The following is a 387-amino-acid chain: MSEYLFTSESVSEGHPDKVADQISDSILDAILEQDPTARVAAETLTNTGLVVLAGEITTTANVDYIKIARDTIKRIGYDNADYGIDYKSCAVLVAYDKQSPDIAQGVNNANDDPLDQGAGDQGLMFGYACDETPQLLPLPIWLSHRMVERQSQLRKDGRLPWLRPDAKSQVTIQYMDGKPHKIDTVLISTQHAPDISLDQVRESVIEEIIKPTLPQELIKGDIKFLVNPTGRFVIGGPQGDCGLTGRKIIVDTYGGAAPHGGGAFSGKDPSKVDRSAAYAGRYVAKNIVAAGLASRCLVQVSYAIGVAKPTSVMVETYGTGKVSNEILTQLVLDHFDLRPKGIVKMLDLLRPIYAKTAAYGHFGRDEPEFTWEATDKAALLRAAAGL.

ATP is bound at residue H15. D17 provides a ligand contact to Mg(2+). K(+) is bound at residue E43. Residues E56 and Q99 each contribute to the L-methionine site. The tract at residues 99–109 (QSPDIAQGVNN) is flexible loop. Residues 166-168 (DAK), 232-233 (RF), D241, 247-248 (RK), A264, and K268 contribute to the ATP site. An L-methionine-binding site is contributed by D241. Residue K272 coordinates L-methionine.

This sequence belongs to the AdoMet synthase family. In terms of assembly, homotetramer; dimer of dimers. The cofactor is Mg(2+). K(+) is required as a cofactor.

Its subcellular location is the cytoplasm. It carries out the reaction L-methionine + ATP + H2O = S-adenosyl-L-methionine + phosphate + diphosphate. Its pathway is amino-acid biosynthesis; S-adenosyl-L-methionine biosynthesis; S-adenosyl-L-methionine from L-methionine: step 1/1. Catalyzes the formation of S-adenosylmethionine (AdoMet) from methionine and ATP. The overall synthetic reaction is composed of two sequential steps, AdoMet formation and the subsequent tripolyphosphate hydrolysis which occurs prior to release of AdoMet from the enzyme. This chain is S-adenosylmethionine synthase, found in Methylobacillus flagellatus (strain ATCC 51484 / DSM 6875 / VKM B-1610 / KT).